We begin with the raw amino-acid sequence, 349 residues long: MTPYDDSPAQAVSTAPRTTGPSLIDGFGRAVTYLRVSVTDRCDLRCVYCMAEHMTFLPKAEVLTLEELDRLASTFVGLGVRKLRLTGGEPLVRKGFIGLVARLSRHLSSGALDELTLTTNGSQLERYASDLARHGVRRINVSLDTLKPALFRALTRGGDVTRVIAGIDAAQAAGMTVKINAVALKHDNAGEIPALIQWAHGRGCDITLIETMPLGEVDQDRTDQFLSLQDVRRDLSSFWTLTDIPDSTGGPARYVHVAETGGRLGLITPLSNHFCDTCNRVRLTCTGTLHTCLGRDDASDLRAEIRRGASDAELVDAIHLAIGAKPKGHDFQIAAAQPAVARHMSTTGG.

Positions 26–245 constitute a Radical SAM core domain; the sequence is GFGRAVTYLR…SSFWTLTDIP (220 aa). Position 35 (Arg35) interacts with GTP. Residues Cys42 and Cys46 each coordinate [4Fe-4S] cluster. Residue Tyr48 participates in S-adenosyl-L-methionine binding. Cys49 is a [4Fe-4S] cluster binding site. Residue Arg84 coordinates GTP. Gly88 contacts S-adenosyl-L-methionine. Thr118 is a GTP binding site. Ser142 provides a ligand contact to S-adenosyl-L-methionine. Residue Lys178 coordinates GTP. Residue Met212 participates in S-adenosyl-L-methionine binding. [4Fe-4S] cluster contacts are provided by Cys275 and Cys278. GTP is bound at residue 280-282; it reads RVR. Cys292 contacts [4Fe-4S] cluster.

It belongs to the radical SAM superfamily. MoaA family. Monomer and homodimer. [4Fe-4S] cluster is required as a cofactor.

The catalysed reaction is GTP + AH2 + S-adenosyl-L-methionine = (8S)-3',8-cyclo-7,8-dihydroguanosine 5'-triphosphate + 5'-deoxyadenosine + L-methionine + A + H(+). It participates in cofactor biosynthesis; molybdopterin biosynthesis. Catalyzes the cyclization of GTP to (8S)-3',8-cyclo-7,8-dihydroguanosine 5'-triphosphate. This Caulobacter vibrioides (strain ATCC 19089 / CIP 103742 / CB 15) (Caulobacter crescentus) protein is GTP 3',8-cyclase.